Consider the following 392-residue polypeptide: MFKHKHPFGGAFLPEELLAPIQNLKAEWEILKTQQSFLSELDCILKNYAGRQTPLTEVKNFARAIDGPRVFLKREDLLHTGAHKLNNALGQCLLAKYLGKTRVVAETGAGQHGVATATACAYLGLDCVVYMGAKDVERQKPNVEKMRFLGAEVVSVTKGSCGLKDAVNQALQDWATTHSFTHYCLGSALGPLPYPDIVRFFQSVISAEVKEQIHAVAGRDPDILIACIGGGSNAIGFFHHFIPNPKVQLIGVEGGGLGISSGKHAARFATGRPGVFHGFYSYLLQDDDGQVLQTHSISAGLDYPSVGPDHAEMHESGRAFYTLATDEEALRAFFLLTRNEGIIPALESSHALAHLVSIAPSLPKEQIVIVNLSGRGDKDLPQIIRRNRGIYE.

An N6-(pyridoxal phosphate)lysine modification is found at Lys-84.

Belongs to the TrpB family. Tetramer of two alpha and two beta chains. Pyridoxal 5'-phosphate serves as cofactor.

It carries out the reaction (1S,2R)-1-C-(indol-3-yl)glycerol 3-phosphate + L-serine = D-glyceraldehyde 3-phosphate + L-tryptophan + H2O. The protein operates within amino-acid biosynthesis; L-tryptophan biosynthesis; L-tryptophan from chorismate: step 5/5. In terms of biological role, the beta subunit is responsible for the synthesis of L-tryptophan from indole and L-serine. The chain is Tryptophan synthase beta chain (trpB) from Chlamydia trachomatis serovar D (strain ATCC VR-885 / DSM 19411 / UW-3/Cx).